Reading from the N-terminus, the 146-residue chain is Snaclec 1 (146 aa).

An N-terminal signal peptide occupies residues 1–23 (MGRFIFISFGLLVVFLSLSGTEA). Intrachain disulfides connect Cys25–Cys36, Cys53–Cys142, and Cys119–Cys134. One can recognise a C-type lectin domain in the interval 32–143 (YEGHCYRVFD…CRNYGHFVCK (112 aa)).

The protein belongs to the snaclec family. In terms of assembly, heterodimer; disulfide-linked. In terms of tissue distribution, expressed by the venom gland.

It is found in the secreted. Interferes with one step of hemostasis (modulation of platelet aggregation, or coagulation cascade, for example). The polypeptide is Snaclec 1 (Bitis arietans (African puff adder)).